Consider the following 447-residue polypeptide: MIKIYDTMTRSLQDFIPLNEGKVNMYVCGPTVYNYIHIGNARSVVAFDTIRRYFEYCGYQVNYISNFTDVDDKIIKGAAEAGMDTKSFSDKFISAFMEDVAALGVKPATKNPRVIDYMDEIIDFVKVLVDKEFAYEANGDVYFRVSKSHHYAKLANKTLEDLEIGASGRVDGEGEIKENPLDFALWKSAKSGEVSWESPWGKGRPGWHIECSVMATEIFGDTIDIHGGGADLEFPHHTNEIAQSEAKTGKTFANYWMHNGFVNVDNEKMSKSLGNFITVHDMLKSVDGQVIRFFLATQQYRKPVNFTEKAVHDAEVNLKYLKNTFNLPIQENANDEELEQFVKAFQGAMDDDFNTANGITVIFEMAKWINSGHYTSRVKETFAELLEIFGIVFQEEVLDADIESLIEQRQEARANRDFATADRIRDELAKQGIKLLDTKDGVRWTRD.

Position 28 (C28) interacts with Zn(2+). A 'HIGH' region motif is present at residues 30 to 40 (PTVYNYIHIGN). The Zn(2+) site is built by C211, H236, and E240. Residues 268-272 (KMSKS) carry the 'KMSKS' region motif. K271 provides a ligand contact to ATP.

The protein belongs to the class-I aminoacyl-tRNA synthetase family. As to quaternary structure, monomer. Zn(2+) is required as a cofactor.

Its subcellular location is the cytoplasm. It carries out the reaction tRNA(Cys) + L-cysteine + ATP = L-cysteinyl-tRNA(Cys) + AMP + diphosphate. In Streptococcus agalactiae serotype Ia (strain ATCC 27591 / A909 / CDC SS700), this protein is Cysteine--tRNA ligase.